A 297-amino-acid polypeptide reads, in one-letter code: UDP-3-O-acyl-N-acetylglucosamine deacetylase (297 aa).

Positions 79, 238, and 242 each coordinate Zn(2+). The active-site Proton donor is His265.

The protein belongs to the LpxC family. Requires Zn(2+) as cofactor.

It catalyses the reaction a UDP-3-O-[(3R)-3-hydroxyacyl]-N-acetyl-alpha-D-glucosamine + H2O = a UDP-3-O-[(3R)-3-hydroxyacyl]-alpha-D-glucosamine + acetate. The protein operates within glycolipid biosynthesis; lipid IV(A) biosynthesis; lipid IV(A) from (3R)-3-hydroxytetradecanoyl-[acyl-carrier-protein] and UDP-N-acetyl-alpha-D-glucosamine: step 2/6. Catalyzes the hydrolysis of UDP-3-O-myristoyl-N-acetylglucosamine to form UDP-3-O-myristoylglucosamine and acetate, the committed step in lipid A biosynthesis. The sequence is that of UDP-3-O-acyl-N-acetylglucosamine deacetylase from Blochmanniella pennsylvanica (strain BPEN).